The primary structure comprises 117 residues: Large ribosomal subunit protein uL18 (117 aa).

This sequence belongs to the universal ribosomal protein uL18 family. Part of the 50S ribosomal subunit; part of the 5S rRNA/L5/L18/L25 subcomplex. Contacts the 5S and 23S rRNAs.

Its function is as follows. This is one of the proteins that bind and probably mediate the attachment of the 5S RNA into the large ribosomal subunit, where it forms part of the central protuberance. This Photobacterium profundum (strain SS9) protein is Large ribosomal subunit protein uL18.